We begin with the raw amino-acid sequence, 142 residues long: Cytochrome b5-related protein (142 aa).

Residues 16-100 (PTYRNSAPVT…IAKYKVRDAY (85 aa)) form the Cytochrome b5 heme-binding domain. Heme contacts are provided by H59 and H82.

It belongs to the cytochrome b5 family.

Functionally, may play a role in muscle cell metabolism. This chain is Cytochrome b5-related protein (Cyt-b5-r), found in Drosophila virilis (Fruit fly).